A 496-amino-acid chain; its full sequence is Probable cytosol aminopeptidase (496 aa).

Residues lysine 257 and aspartate 262 each coordinate Mn(2+). Lysine 269 is an active-site residue. Mn(2+)-binding residues include aspartate 281, aspartate 341, and glutamate 343. The active site involves arginine 345.

The protein belongs to the peptidase M17 family. The cofactor is Mn(2+).

It is found in the cytoplasm. It catalyses the reaction Release of an N-terminal amino acid, Xaa-|-Yaa-, in which Xaa is preferably Leu, but may be other amino acids including Pro although not Arg or Lys, and Yaa may be Pro. Amino acid amides and methyl esters are also readily hydrolyzed, but rates on arylamides are exceedingly low.. The catalysed reaction is Release of an N-terminal amino acid, preferentially leucine, but not glutamic or aspartic acids.. Presumably involved in the processing and regular turnover of intracellular proteins. Catalyzes the removal of unsubstituted N-terminal amino acids from various peptides. The chain is Probable cytosol aminopeptidase from Prochlorococcus marinus (strain SARG / CCMP1375 / SS120).